A 656-amino-acid chain; its full sequence is MGDNRWLKNSFVYLIILVAALALFFQYLGPGASQTEEKGIADVIADAQAGLVREIQAQAGDEQIIVTYNDGKKYRSRLESADSVMRLLADYGVPLRNEQGQRTINVIVQPAPAWGGLLSIFTILLPTLLLIGFFVFFMRQAQGSNNQAMSFGKSRARMFAGDKPTITFADVAGQEEAKQDLAEIVEFLKFPDKFAALGARIPRGVLMVGPPGTGKTLLSRAVAGEAGVPFFSISGSEFVEMFVGVGASRVRDLFDQAKRNAPCIVFIDEIDAVGRQRGAGLGGSHDEREQTLNQILVEMDGFDTNTNVIVIAATNRPDVLDPALVRPGRFDRQVVLDAPDVRGRIEILKVHVKGKPLAEDVNLEILARQTPGFSGADLMNVVNEAAILAARRSKRKISMAEFQDAVERVAIGGPERRSRVMTDRQKLVVAYHEAGHAIVGAALPKADKVQKVTIIPRGQAGGYTLFLPDEDSLNLRTVSQFKARLAVSLGGRVAEEIVFGNEEVTTGASGDLVQVTRIARAMVTRYGMSQRLGPIVFGEKEELIFLGREISEQRNYGDEVARQIDEEVHAIVSEAYETAQQILLQNRAVLDDMANALIEYETLDGEQLEELIRRVKPLTLDFSKSGSTTPNGRTEDRPAQPDAPQMGLGGPSPLPA.

At 1-10 (MGDNRWLKNS) the chain is on the cytoplasmic side. A helical transmembrane segment spans residues 11-31 (FVYLIILVAALALFFQYLGPG). Topologically, residues 32-116 (ASQTEEKGIA…IVQPAPAWGG (85 aa)) are extracellular. Residues 117–137 (LLSIFTILLPTLLLIGFFVFF) traverse the membrane as a helical segment. Over 138–656 (MRQAQGSNNQ…GLGGPSPLPA (519 aa)) the chain is Cytoplasmic. Position 209–216 (209–216 (GPPGTGKT)) interacts with ATP. Position 432 (histidine 432) interacts with Zn(2+). Glutamate 433 is a catalytic residue. Histidine 436 and aspartate 511 together coordinate Zn(2+). A compositionally biased stretch (polar residues) spans 622–632 (FSKSGSTTPNG). The disordered stretch occupies residues 622–656 (FSKSGSTTPNGRTEDRPAQPDAPQMGLGGPSPLPA).

This sequence in the central section; belongs to the AAA ATPase family. It in the C-terminal section; belongs to the peptidase M41 family. Homohexamer. Zn(2+) serves as cofactor.

The protein localises to the cell membrane. Its function is as follows. Acts as a processive, ATP-dependent zinc metallopeptidase for both cytoplasmic and membrane proteins. Plays a role in the quality control of integral membrane proteins. The protein is ATP-dependent zinc metalloprotease FtsH of Chloroflexus aggregans (strain MD-66 / DSM 9485).